The following is a 202-amino-acid chain: MSRYRGPRVKIIRRLGALPGLTTKTLKSKSGYINQSTSNKKVSQYRIRLEEKQKLRFHYGLTERQLLKYVRIARKAKGSTGQVLLQLLEMRLDNILFRLGMALTVPGARQLVNHRHILINNSMVDIPSYNCKPKDVITIKDRPKSQSIITKNLNSFQKSKVPNHLSFDLMQVKGLVNQMIDREWILLKINELLVVEYYSRQV.

In terms of domain architecture, S4 RNA-binding spans M90 to N154.

This sequence belongs to the universal ribosomal protein uS4 family. Part of the 30S ribosomal subunit. Contacts protein S5. The interaction surface between S4 and S5 is involved in control of translational fidelity.

It is found in the plastid. The protein localises to the chloroplast. One of the primary rRNA binding proteins, it binds directly to 16S rRNA where it nucleates assembly of the body of the 30S subunit. Functionally, with S5 and S12 plays an important role in translational accuracy. The chain is Small ribosomal subunit protein uS4c (rps4) from Monoclea forsteri (Liverwort).